Reading from the N-terminus, the 357-residue chain is 3-isopropylmalate dehydrogenase (357 aa).

Residues Arg-97, Arg-107, Arg-135, and Asp-224 each coordinate substrate. Asp-224, Asp-248, and Asp-252 together coordinate Mg(2+). An NAD(+)-binding site is contributed by 282-294; it reads GSAPDIAGQDKAN.

The protein belongs to the isocitrate and isopropylmalate dehydrogenases family. LeuB type 1 subfamily. As to quaternary structure, homodimer. It depends on Mg(2+) as a cofactor. Mn(2+) is required as a cofactor.

Its subcellular location is the cytoplasm. The enzyme catalyses (2R,3S)-3-isopropylmalate + NAD(+) = 4-methyl-2-oxopentanoate + CO2 + NADH. Its pathway is amino-acid biosynthesis; L-leucine biosynthesis; L-leucine from 3-methyl-2-oxobutanoate: step 3/4. Its function is as follows. Catalyzes the oxidation of 3-carboxy-2-hydroxy-4-methylpentanoate (3-isopropylmalate) to 3-carboxy-4-methyl-2-oxopentanoate. The product decarboxylates to 4-methyl-2 oxopentanoate. In Synechococcus sp. (strain CC9902), this protein is 3-isopropylmalate dehydrogenase.